A 461-amino-acid chain; its full sequence is Photosystem II CP43 reaction center protein (461 aa).

The propeptide occupies 1–2 (ME). Thr-3 bears the N-acetylthreonine mark. At Thr-3 the chain carries Phosphothreonine. 5 helical membrane passes run 57–81 (LFEVAHFVPEKPMYEQGLILLPHLA), 122–143 (LIGPETLEESFPFFGYVWKDKN), 166–188 (KAMYFGGVYDTWAPGGGDVRVIT), 243–263 (KPFAWARRALVWSGEAYLSYS), and 279–300 (WFNNTAYPSEFYGPTGPEASQA). Residue Glu-355 coordinates [CaMn4O5] cluster. Residues 435–459 (RARAAAAGFEKGIERETEPALSMKP) form a helical membrane-spanning segment.

This sequence belongs to the PsbB/PsbC family. PsbC subfamily. PSII is composed of 1 copy each of membrane proteins PsbA, PsbB, PsbC, PsbD, PsbE, PsbF, PsbH, PsbI, PsbJ, PsbK, PsbL, PsbM, PsbT, PsbX, PsbY, PsbZ, Psb30/Ycf12, at least 3 peripheral proteins of the oxygen-evolving complex and a large number of cofactors. It forms dimeric complexes. It depends on Binds multiple chlorophylls and provides some of the ligands for the Ca-4Mn-5O cluster of the oxygen-evolving complex. It may also provide a ligand for a Cl- that is required for oxygen evolution. PSII binds additional chlorophylls, carotenoids and specific lipids. as a cofactor.

It localises to the plastid. Its subcellular location is the chloroplast thylakoid membrane. Its function is as follows. One of the components of the core complex of photosystem II (PSII). It binds chlorophyll and helps catalyze the primary light-induced photochemical processes of PSII. PSII is a light-driven water:plastoquinone oxidoreductase, using light energy to abstract electrons from H(2)O, generating O(2) and a proton gradient subsequently used for ATP formation. The polypeptide is Photosystem II CP43 reaction center protein (Chlorokybus atmophyticus (Soil alga)).